The sequence spans 297 residues: Phosphoribosylaminoimidazole-succinocarboxamide synthase (297 aa).

It belongs to the SAICAR synthetase family.

It carries out the reaction 5-amino-1-(5-phospho-D-ribosyl)imidazole-4-carboxylate + L-aspartate + ATP = (2S)-2-[5-amino-1-(5-phospho-beta-D-ribosyl)imidazole-4-carboxamido]succinate + ADP + phosphate + 2 H(+). It participates in purine metabolism; IMP biosynthesis via de novo pathway; 5-amino-1-(5-phospho-D-ribosyl)imidazole-4-carboxamide from 5-amino-1-(5-phospho-D-ribosyl)imidazole-4-carboxylate: step 1/2. In Rhodococcus erythropolis (strain PR4 / NBRC 100887), this protein is Phosphoribosylaminoimidazole-succinocarboxamide synthase.